The sequence spans 42 residues: Photosystem II reaction center protein J (42 aa).

Residues I10–F30 form a helical membrane-spanning segment.

It belongs to the PsbJ family. As to quaternary structure, PSII is composed of 1 copy each of membrane proteins PsbA, PsbB, PsbC, PsbD, PsbE, PsbF, PsbH, PsbI, PsbJ, PsbK, PsbL, PsbM, PsbT, PsbX, PsbY, PsbZ, Psb30/Ycf12, at least 3 peripheral proteins of the oxygen-evolving complex and a large number of cofactors. It forms dimeric complexes.

It localises to the plastid. The protein localises to the chloroplast thylakoid membrane. Its function is as follows. One of the components of the core complex of photosystem II (PSII). PSII is a light-driven water:plastoquinone oxidoreductase that uses light energy to abstract electrons from H(2)O, generating O(2) and a proton gradient subsequently used for ATP formation. It consists of a core antenna complex that captures photons, and an electron transfer chain that converts photonic excitation into a charge separation. The sequence is that of Photosystem II reaction center protein J from Oltmannsiellopsis viridis (Marine flagellate).